A 349-amino-acid chain; its full sequence is Phenylalanine--tRNA ligase alpha subunit (349 aa).

E259 contacts Mg(2+).

Belongs to the class-II aminoacyl-tRNA synthetase family. Phe-tRNA synthetase alpha subunit type 1 subfamily. Tetramer of two alpha and two beta subunits. It depends on Mg(2+) as a cofactor.

The protein resides in the cytoplasm. It carries out the reaction tRNA(Phe) + L-phenylalanine + ATP = L-phenylalanyl-tRNA(Phe) + AMP + diphosphate + H(+). The polypeptide is Phenylalanine--tRNA ligase alpha subunit (Lactobacillus delbrueckii subsp. bulgaricus (strain ATCC 11842 / DSM 20081 / BCRC 10696 / JCM 1002 / NBRC 13953 / NCIMB 11778 / NCTC 12712 / WDCM 00102 / Lb 14)).